We begin with the raw amino-acid sequence, 351 residues long: Phosphoribosylformylglycinamidine cyclo-ligase (351 aa).

It belongs to the AIR synthase family.

The protein localises to the cytoplasm. It catalyses the reaction 2-formamido-N(1)-(5-O-phospho-beta-D-ribosyl)acetamidine + ATP = 5-amino-1-(5-phospho-beta-D-ribosyl)imidazole + ADP + phosphate + H(+). The protein operates within purine metabolism; IMP biosynthesis via de novo pathway; 5-amino-1-(5-phospho-D-ribosyl)imidazole from N(2)-formyl-N(1)-(5-phospho-D-ribosyl)glycinamide: step 2/2. The polypeptide is Phosphoribosylformylglycinamidine cyclo-ligase (Burkholderia ambifaria (strain ATCC BAA-244 / DSM 16087 / CCUG 44356 / LMG 19182 / AMMD) (Burkholderia cepacia (strain AMMD))).